The sequence spans 101 residues: Small ribosomal subunit protein uS14 (101 aa).

It belongs to the universal ribosomal protein uS14 family. Part of the 30S ribosomal subunit. Contacts proteins S3 and S10.

Its function is as follows. Binds 16S rRNA, required for the assembly of 30S particles and may also be responsible for determining the conformation of the 16S rRNA at the A site. This is Small ribosomal subunit protein uS14 from Serratia proteamaculans (strain 568).